The primary structure comprises 445 residues: Tubulin alpha-3 chain (445 aa).

The GTP site is built by Q11, E72, S141, G145, T146, T180, N207, and N229. E72 provides a ligand contact to Mg(2+). E255 is a catalytic residue.

This sequence belongs to the tubulin family. In terms of assembly, dimer of alpha and beta chains. A typical microtubule is a hollow water-filled tube with an outer diameter of 25 nm and an inner diameter of 15 nM. Alpha-beta heterodimers associate head-to-tail to form protofilaments running lengthwise along the microtubule wall with the beta-tubulin subunit facing the microtubule plus end conferring a structural polarity. Microtubules usually have 13 protofilaments but different protofilament numbers can be found in some organisms and specialized cells. Interacts with NUM1. Mg(2+) serves as cofactor.

It is found in the cytoplasm. The protein localises to the cytoskeleton. It catalyses the reaction GTP + H2O = GDP + phosphate + H(+). In terms of biological role, tubulin is the major constituent of microtubules, a cylinder consisting of laterally associated linear protofilaments composed of alpha- and beta-tubulin heterodimers. Microtubules grow by the addition of GTP-tubulin dimers to the microtubule end, where a stabilizing cap forms. Below the cap, tubulin dimers are in GDP-bound state, owing to GTPase activity of alpha-tubulin. This Saccharomyces cerevisiae (strain ATCC 204508 / S288c) (Baker's yeast) protein is Tubulin alpha-3 chain (TUB3).